We begin with the raw amino-acid sequence, 1320 residues long: Centrosomin (1320 aa).

Residues 20-41 (ASFDVPRPPGGGNSPLPSQGRS) form a disordered region. Residues 97 to 516 (RKTVDVKMEL…SSQEKEIKKL (420 aa)) adopt a coiled-coil conformation. Residues 517–530 (NQENEQSANKENDC) show a composition bias toward basic and acidic residues. The interval 517 to 554 (NQENEQSANKENDCAKTVISPSSSGRSMSDNEASSQEM) is disordered. The segment covering 535–554 (ISPSSSGRSMSDNEASSQEM) has biased composition (polar residues). Phosphoserine is present on Ser-545. Coiled coils occupy residues 626–654 (EADLQQSFTEAEYMRALERNKLLQRKVDV) and 712–983 (NSLL…LKLA). Residues 644-656 (RNKLLQRKVDVLF) carry the Nuclear localization signal motif. Phosphothreonine is present on Thr-782. Ser-785 carries the post-translational modification Phosphoserine. Residues 810–823 (KKELEKRRSSEGQR) show a composition bias toward basic and acidic residues. Disordered regions lie at residues 810-849 (KKELEKRRSSEGQRKERRSLPLPSQQFDNQSESEAWSEPD) and 863-893 (SNSLAAPEQAISESESEGRTCATRQDRNRNS). The span at 831–843 (LPSQQFDNQSESE) shows a compositional bias: polar residues. A phosphoserine mark is found at Ser-874, Ser-876, Ser-878, Ser-1191, Ser-1234, Ser-1237, and Ser-1239. The tract at residues 1220–1249 (VEMKTEGSASPKAKSEESTSPDSKSNVATG) is disordered. Residues 1237 to 1247 (STSPDSKSNVA) show a composition bias toward polar residues.

Monomer. Developing visceral mesoderm of the midgut, the central and peripheral nervous system, and developing gonads. Isoform J: Expressed in ovaries, testis and embryos. Isoform A: Expressed in testis only.

It is found in the cytoplasm. The protein localises to the cytoskeleton. The protein resides in the microtubule organizing center. Its subcellular location is the centrosome. It localises to the flagellum basal body. It is found in the perinuclear region. Functionally, core component of the centrosome throughout spermatogenesis. May participate in mitotic spindle assembly and the mechanics of morphogenesis through an interaction with microtubules, either directly or indirectly. Is a target of several homeotic genes. This is Centrosomin (cnn) from Drosophila melanogaster (Fruit fly).